The following is a 700-amino-acid chain: Polyribonucleotide nucleotidyltransferase (700 aa).

Residues D484 and D490 each contribute to the Mg(2+) site. The KH domain occupies 551-610 (PRVIRMVVDPEKIREIIGPGGKTISKIIAETGVKIDIEEDGRLYITASDLRSGERAKQMI). Residues 620-688 (GEIYLGKVLR…KLGRISLSRK (69 aa)) enclose the S1 motif domain.

This sequence belongs to the polyribonucleotide nucleotidyltransferase family. Requires Mg(2+) as cofactor.

It is found in the cytoplasm. It carries out the reaction RNA(n+1) + phosphate = RNA(n) + a ribonucleoside 5'-diphosphate. Its function is as follows. Involved in mRNA degradation. Catalyzes the phosphorolysis of single-stranded polyribonucleotides processively in the 3'- to 5'-direction. The polypeptide is Polyribonucleotide nucleotidyltransferase (Thermoanaerobacter sp. (strain X514)).